A 940-amino-acid chain; its full sequence is UvrABC system protein A (940 aa).

Residue 31 to 38 (GLSGSGKS) coordinates ATP. The C4-type zinc finger occupies 252-279 (CPHCGYSMQELEPRLFSFNNPAGACGTC). ABC transporter domains are found at residues 309-586 (WDQK…PDSL) and 606-936 (RDKN…RFLK). 639–646 (GVSGSGKS) is an ATP binding site. The segment at 739-765 (CEACQGDGVIKVEMHFLPDVYVPCDVC) adopts a C4-type zinc-finger fold.

Belongs to the ABC transporter superfamily. UvrA family. In terms of assembly, forms a heterotetramer with UvrB during the search for lesions.

It is found in the cytoplasm. In terms of biological role, the UvrABC repair system catalyzes the recognition and processing of DNA lesions. UvrA is an ATPase and a DNA-binding protein. A damage recognition complex composed of 2 UvrA and 2 UvrB subunits scans DNA for abnormalities. When the presence of a lesion has been verified by UvrB, the UvrA molecules dissociate. The sequence is that of UvrABC system protein A from Vibrio vulnificus (strain YJ016).